A 293-amino-acid chain; its full sequence is Ribosomal protein L11 methyltransferase (293 aa).

S-adenosyl-L-methionine is bound by residues T145, G166, D188, and N230.

The protein belongs to the methyltransferase superfamily. PrmA family.

Its subcellular location is the cytoplasm. The enzyme catalyses L-lysyl-[protein] + 3 S-adenosyl-L-methionine = N(6),N(6),N(6)-trimethyl-L-lysyl-[protein] + 3 S-adenosyl-L-homocysteine + 3 H(+). Functionally, methylates ribosomal protein L11. This chain is Ribosomal protein L11 methyltransferase, found in Salmonella agona (strain SL483).